A 1061-amino-acid chain; its full sequence is TonB-dependent transporter Oar (1061 aa).

The first 26 residues, 1–26 (MHLNRVLRETGVVVAAGLLYGSAAFA), serve as a signal peptide directing secretion. Positions 121-243 (EIVGAPPTID…TGGVINAVTR (123 aa)) constitute a TBDR plug domain. One can recognise a TBDR beta-barrel domain in the interval 248–1061 (EFHGSVFANW…QVRFGIRYTF (814 aa)). The disordered stretch occupies residues 701–722 (RSLAEPGQGTATSCDPSSFESQ). Residues 709–722 (GTATSCDPSSFESQ) show a composition bias toward polar residues.

It belongs to the TonB-dependent receptor family. Interacts with TonB. Part of a transport system composed of the outer membrane transporter Oar, the trans-periplasmic binding protein TonB and the inner membrane proteins ExbB and ExbD.

It is found in the cell outer membrane. Required for secretion of the protease PopC across the bacterial outer membrane. Binds and probably transports PopC from the periplasm to the extracellular milieu. It derives its energy for transport by interacting with the trans-periplasmic membrane protein TonB. Required for cellular adhesion during fruiting body formation, a multicellular developmental program that is induced in response to starvation. The chain is TonB-dependent transporter Oar from Myxococcus xanthus.